A 606-amino-acid chain; its full sequence is Glutamine--fructose-6-phosphate aminotransferase [isomerizing] (606 aa).

Cys-2 (nucleophile; for GATase activity) is an active-site residue. The region spanning 2-217 (CGIIGIVGKE…EGDYVALDHD (216 aa)) is the Glutamine amidotransferase type-2 domain. SIS domains follow at residues 280-421 (VPGD…ARGT) and 454-596 (IAAD…VDQP). The For Fru-6P isomerization activity role is filled by Lys-601.

As to quaternary structure, homodimer.

It is found in the cytoplasm. The catalysed reaction is D-fructose 6-phosphate + L-glutamine = D-glucosamine 6-phosphate + L-glutamate. In terms of biological role, catalyzes the first step in hexosamine metabolism, converting fructose-6P into glucosamine-6P using glutamine as a nitrogen source. This is Glutamine--fructose-6-phosphate aminotransferase [isomerizing] from Caulobacter vibrioides (strain ATCC 19089 / CIP 103742 / CB 15) (Caulobacter crescentus).